We begin with the raw amino-acid sequence, 326 residues long: D-threonate 4-phosphate dehydrogenase (326 aa).

The substrate site is built by His-138 and Thr-139. Residues His-168, His-212, and His-267 each coordinate a divalent metal cation. Residues Lys-275, Asn-284, and Arg-293 each contribute to the substrate site.

The protein belongs to the PdxA family. PdxA2 subfamily. As to quaternary structure, homodimer. It depends on a divalent metal cation as a cofactor.

It carries out the reaction 4-O-phospho-D-threonate + NAD(+) = dihydroxyacetone phosphate + CO2 + NADH. Catalyzes the NAD-dependent oxidation and subsequent decarboxylation of D-threonate 4-phosphate to produce dihydroxyacetone phosphate (DHAP). Can also use 4-hydroxy-L-threonine 4-phosphate as substrate. The sequence is that of D-threonate 4-phosphate dehydrogenase from Pectobacterium atrosepticum (strain SCRI 1043 / ATCC BAA-672) (Erwinia carotovora subsp. atroseptica).